A 449-amino-acid polypeptide reads, in one-letter code: Cortexillin-2 (449 aa).

The segment at 1-231 is actin-binding; that stretch reads MTDLHKEWEK…ILYTSLFFHA (231 aa). 2 consecutive Calponin-homology (CH) domains span residues 10–119 and 128–233; these read KVQE…RKYR and KSSE…HAYR. 2 coiled-coil regions span residues 232–364 and 408–441; these read YRAK…AEGL and QFEE…LKSA.

It belongs to the cortexillin family. As to quaternary structure, homodimer; parallel.

It localises to the cytoplasm. The protein localises to the cytoskeleton. In terms of biological role, actin-bundling protein. When linked to F-actin the actin filaments form preferentially anti-parallel bundles that associate into meshworks. Plays a major role in cytokinesis. This chain is Cortexillin-2 (ctxB), found in Heterostelium pallidum (strain ATCC 26659 / Pp 5 / PN500) (Cellular slime mold).